The primary structure comprises 712 residues: Cyclomaltodextrin glucanotransferase (712 aa).

Residues 1–27 (MKRFMKLTAVWTLWLSLTLGLLSPVHA) form the signal peptide. The A1 stretch occupies residues 28–165 (APDTSVSNKQ…NIKVIIDFAP (138 aa)). Residues D54, N56, N59, and N60 each contribute to the Ca(2+) site. An intrachain disulfide couples C70 to C77. Residues G78 and D80 each contribute to the Ca(2+) site. A substrate-binding site is contributed by 127 to 128 (YW). Position 166 (N166) interacts with Ca(2+). Residues 166 to 229 (NHTSPASSDD…NLYDLADLNH (64 aa)) are b. H167 serves as a coordination point for substrate. I217 lines the Ca(2+) pocket. 220 to 223 (NLYD) provides a ligand contact to substrate. Position 226 (D226) interacts with Ca(2+). The interval 230–433 (NNSSVDVYLK…LRKSNPAIAY (204 aa)) is A2. R254 contributes to the substrate binding site. D256 acts as the Nucleophile in catalysis. Residue 259–260 (KH) participates in substrate binding. Ca(2+) is bound at residue H260. E284 acts as the Proton donor in catalysis. Substrate-binding residues include H354, D398, and R402. Positions 434-522 (GSTQERWINN…GTAVWQYTTD (89 aa)) are c. The segment at 523-608 (ATAPINGNVG…SNIYDNFEVL (86 aa)) is d. The 81-residue stretch at 526–606 (PINGNVGPMM…AASNIYDNFE (81 aa)) folds into the IPT/TIG domain. The CBM20 domain occupies 607 to 712 (VLTGDQVTVR…TATVNVNWQP (106 aa)). The interval 609 to 712 (TGDQVTVRFV…TATVNVNWQP (104 aa)) is e.

Belongs to the glycosyl hydrolase 13 family. In terms of assembly, monomer. Ca(2+) is required as a cofactor.

It is found in the secreted. It carries out the reaction Cyclizes part of a (1-&gt;4)-alpha-D-glucan chain by formation of a (1-&gt;4)-alpha-D-glucosidic bond.. This chain is Cyclomaltodextrin glucanotransferase (cgt), found in Bacillus sp. (strain 38-2).